The following is a 473-amino-acid chain: ATP synthase subunit beta (473 aa).

158–165 (GGAGVGKT) is an ATP binding site.

This sequence belongs to the ATPase alpha/beta chains family. F-type ATPases have 2 components, CF(1) - the catalytic core - and CF(0) - the membrane proton channel. CF(1) has five subunits: alpha(3), beta(3), gamma(1), delta(1), epsilon(1). CF(0) has three main subunits: a(1), b(2) and c(9-12). The alpha and beta chains form an alternating ring which encloses part of the gamma chain. CF(1) is attached to CF(0) by a central stalk formed by the gamma and epsilon chains, while a peripheral stalk is formed by the delta and b chains.

Its subcellular location is the cell membrane. It carries out the reaction ATP + H2O + 4 H(+)(in) = ADP + phosphate + 5 H(+)(out). Produces ATP from ADP in the presence of a proton gradient across the membrane. The catalytic sites are hosted primarily by the beta subunits. This chain is ATP synthase subunit beta, found in Anoxybacillus flavithermus (strain DSM 21510 / WK1).